Consider the following 325-residue polypeptide: Tetraacyldisaccharide 4'-kinase (325 aa).

Residue Thr-55–Thr-62 participates in ATP binding.

This sequence belongs to the LpxK family.

It catalyses the reaction a lipid A disaccharide + ATP = a lipid IVA + ADP + H(+). It participates in glycolipid biosynthesis; lipid IV(A) biosynthesis; lipid IV(A) from (3R)-3-hydroxytetradecanoyl-[acyl-carrier-protein] and UDP-N-acetyl-alpha-D-glucosamine: step 6/6. In terms of biological role, transfers the gamma-phosphate of ATP to the 4'-position of a tetraacyldisaccharide 1-phosphate intermediate (termed DS-1-P) to form tetraacyldisaccharide 1,4'-bis-phosphate (lipid IVA). The polypeptide is Tetraacyldisaccharide 4'-kinase (Cronobacter sakazakii (strain ATCC BAA-894) (Enterobacter sakazakii)).